Here is a 395-residue protein sequence, read N- to C-terminus: Galactokinase (395 aa).

39-42 serves as a coordination point for substrate; the sequence is EHTD. ATP is bound by residues S73 and 127–133; that span reads GAGLSSS. Mg(2+) contacts are provided by S133 and E165. The Proton acceptor role is filled by D177. A substrate-binding site is contributed by Y227.

Belongs to the GHMP kinase family. GalK subfamily.

Its subcellular location is the cytoplasm. The catalysed reaction is alpha-D-galactose + ATP = alpha-D-galactose 1-phosphate + ADP + H(+). It participates in carbohydrate metabolism; galactose metabolism. Catalyzes the transfer of the gamma-phosphate of ATP to D-galactose to form alpha-D-galactose-1-phosphate (Gal-1-P). The chain is Galactokinase from Halalkalibacterium halodurans (strain ATCC BAA-125 / DSM 18197 / FERM 7344 / JCM 9153 / C-125) (Bacillus halodurans).